The sequence spans 338 residues: Anthranilate phosphoribosyltransferase (338 aa).

Residues Gly-80, 83–84 (GD), Thr-88, 90–93 (NIST), 108–116 (KHGNRSVSS), and Ser-120 contribute to the 5-phospho-alpha-D-ribose 1-diphosphate site. Gly-80 is an anthranilate binding site. Ser-92 is a Mg(2+) binding site. Asn-111 contributes to the anthranilate binding site. Arg-166 is an anthranilate binding site. Asp-225 and Glu-226 together coordinate Mg(2+).

It belongs to the anthranilate phosphoribosyltransferase family. In terms of assembly, homodimer. It depends on Mg(2+) as a cofactor.

It catalyses the reaction N-(5-phospho-beta-D-ribosyl)anthranilate + diphosphate = 5-phospho-alpha-D-ribose 1-diphosphate + anthranilate. The protein operates within amino-acid biosynthesis; L-tryptophan biosynthesis; L-tryptophan from chorismate: step 2/5. Catalyzes the transfer of the phosphoribosyl group of 5-phosphorylribose-1-pyrophosphate (PRPP) to anthranilate to yield N-(5'-phosphoribosyl)-anthranilate (PRA). The polypeptide is Anthranilate phosphoribosyltransferase (Desulfatibacillum aliphaticivorans).